The following is a 217-amino-acid chain: Homeobox protein Hox-B7 (217 aa).

The short motif at I126 to R131 is the Antp-type hexapeptide element. A DNA-binding region (homeobox) is located at residues R137–N196. A disordered region spans residues W192 to E217.

Belongs to the Antp homeobox family. As to quaternary structure, forms a DNA-binding heterodimer with transcription factor PBX1.

It localises to the nucleus. In terms of biological role, sequence-specific transcription factor which is part of a developmental regulatory system that provides cells with specific positional identities on the anterior-posterior axis. This Mus musculus (Mouse) protein is Homeobox protein Hox-B7 (Hoxb7).